Here is a 250-residue protein sequence, read N- to C-terminus: 3-deoxy-manno-octulosonate cytidylyltransferase (250 aa).

It belongs to the KdsB family.

It is found in the cytoplasm. The catalysed reaction is 3-deoxy-alpha-D-manno-oct-2-ulosonate + CTP = CMP-3-deoxy-beta-D-manno-octulosonate + diphosphate. It participates in nucleotide-sugar biosynthesis; CMP-3-deoxy-D-manno-octulosonate biosynthesis; CMP-3-deoxy-D-manno-octulosonate from 3-deoxy-D-manno-octulosonate and CTP: step 1/1. Its pathway is bacterial outer membrane biogenesis; lipopolysaccharide biosynthesis. In terms of biological role, activates KDO (a required 8-carbon sugar) for incorporation into bacterial lipopolysaccharide in Gram-negative bacteria. The chain is 3-deoxy-manno-octulosonate cytidylyltransferase from Legionella pneumophila (strain Corby).